Reading from the N-terminus, the 106-residue chain is Nucleoid-associated protein Abu_0429 (106 aa).

This sequence belongs to the YbaB/EbfC family. Homodimer.

The protein resides in the cytoplasm. It localises to the nucleoid. Binds to DNA and alters its conformation. May be involved in regulation of gene expression, nucleoid organization and DNA protection. In Aliarcobacter butzleri (strain RM4018) (Arcobacter butzleri), this protein is Nucleoid-associated protein Abu_0429.